We begin with the raw amino-acid sequence, 143 residues long: Large ribosomal subunit protein uL11 (143 aa).

This sequence belongs to the universal ribosomal protein uL11 family. In terms of assembly, part of the ribosomal stalk of the 50S ribosomal subunit. Interacts with L10 and the large rRNA to form the base of the stalk. L10 forms an elongated spine to which L12 dimers bind in a sequential fashion forming a multimeric L10(L12)X complex. Post-translationally, one or more lysine residues are methylated.

Functionally, forms part of the ribosomal stalk which helps the ribosome interact with GTP-bound translation factors. This Polynucleobacter necessarius subsp. necessarius (strain STIR1) protein is Large ribosomal subunit protein uL11.